The sequence spans 338 residues: Ketol-acid reductoisomerase (NADP(+)) (338 aa).

A KARI N-terminal Rossmann domain is found at 1-181; that stretch reads MKVFYDKDAD…GGGRAGIIET (181 aa). NADP(+)-binding positions include 24-27, Arg47, and Ser52; that span reads YGSQ. His107 is an active-site residue. Gly133 is an NADP(+) binding site. The region spanning 182–327 is the KARI C-terminal knotted domain; sequence NFREETETDL…AKLRAMMPWI (146 aa). The Mg(2+) site is built by Asp190, Glu194, Glu226, and Glu230. Ser251 provides a ligand contact to substrate.

This sequence belongs to the ketol-acid reductoisomerase family. It depends on Mg(2+) as a cofactor.

The enzyme catalyses (2R)-2,3-dihydroxy-3-methylbutanoate + NADP(+) = (2S)-2-acetolactate + NADPH + H(+). It catalyses the reaction (2R,3R)-2,3-dihydroxy-3-methylpentanoate + NADP(+) = (S)-2-ethyl-2-hydroxy-3-oxobutanoate + NADPH + H(+). It participates in amino-acid biosynthesis; L-isoleucine biosynthesis; L-isoleucine from 2-oxobutanoate: step 2/4. Its pathway is amino-acid biosynthesis; L-valine biosynthesis; L-valine from pyruvate: step 2/4. In terms of biological role, involved in the biosynthesis of branched-chain amino acids (BCAA). Catalyzes an alkyl-migration followed by a ketol-acid reduction of (S)-2-acetolactate (S2AL) to yield (R)-2,3-dihydroxy-isovalerate. In the isomerase reaction, S2AL is rearranged via a Mg-dependent methyl migration to produce 3-hydroxy-3-methyl-2-ketobutyrate (HMKB). In the reductase reaction, this 2-ketoacid undergoes a metal-dependent reduction by NADPH to yield (R)-2,3-dihydroxy-isovalerate. This chain is Ketol-acid reductoisomerase (NADP(+)), found in Polynucleobacter asymbioticus (strain DSM 18221 / CIP 109841 / QLW-P1DMWA-1) (Polynucleobacter necessarius subsp. asymbioticus).